The sequence spans 151 residues: Transmembrane protein 239 (151 aa).

A run of 3 helical transmembrane segments spans residues 61–81, 85–105, and 116–138; these read LWGLEGTLYLLLALMLCHALF, SYLLSSLWPVVAVMWSHLLPA, and ALLFAASFLLLFSTLLSLVGLLT.

The protein resides in the membrane. In Mus musculus (Mouse), this protein is Transmembrane protein 239 (Tmem239).